The sequence spans 312 residues: Holliday junction branch migration complex subunit RuvB (312 aa).

The tract at residues 1–168 is large ATPase domain (RuvB-L); that stretch reads MKTNNEFRPQ…FGHVFYLSEY (168 aa). Residues Arg8, Gly49, Lys52, Thr53, Thr54, 115 to 117, Arg158, Tyr168, and Arg206 contribute to the ATP site; that span reads EDF. A Mg(2+)-binding site is contributed by Thr53. The tract at residues 169 to 234 is small ATPAse domain (RuvB-S); that stretch reads ETSEIAAIIL…NIKNIFEKIQ (66 aa). The segment at 237-312 is head domain (RuvB-H); it reads DFGLEEQDIN…EFLKNNQLIK (76 aa). DNA is bound by residues Lys290 and Arg295.

This sequence belongs to the RuvB family. Homohexamer. Forms an RuvA(8)-RuvB(12)-Holliday junction (HJ) complex. HJ DNA is sandwiched between 2 RuvA tetramers; dsDNA enters through RuvA and exits via RuvB. An RuvB hexamer assembles on each DNA strand where it exits the tetramer. Each RuvB hexamer is contacted by two RuvA subunits (via domain III) on 2 adjacent RuvB subunits; this complex drives branch migration. In the full resolvosome a probable DNA-RuvA(4)-RuvB(12)-RuvC(2) complex forms which resolves the HJ.

It is found in the cytoplasm. It catalyses the reaction ATP + H2O = ADP + phosphate + H(+). Functionally, the RuvA-RuvB-RuvC complex processes Holliday junction (HJ) DNA during genetic recombination and DNA repair, while the RuvA-RuvB complex plays an important role in the rescue of blocked DNA replication forks via replication fork reversal (RFR). RuvA specifically binds to HJ cruciform DNA, conferring on it an open structure. The RuvB hexamer acts as an ATP-dependent pump, pulling dsDNA into and through the RuvAB complex. RuvB forms 2 homohexamers on either side of HJ DNA bound by 1 or 2 RuvA tetramers; 4 subunits per hexamer contact DNA at a time. Coordinated motions by a converter formed by DNA-disengaged RuvB subunits stimulates ATP hydrolysis and nucleotide exchange. Immobilization of the converter enables RuvB to convert the ATP-contained energy into a lever motion, pulling 2 nucleotides of DNA out of the RuvA tetramer per ATP hydrolyzed, thus driving DNA branch migration. The RuvB motors rotate together with the DNA substrate, which together with the progressing nucleotide cycle form the mechanistic basis for DNA recombination by continuous HJ branch migration. Branch migration allows RuvC to scan DNA until it finds its consensus sequence, where it cleaves and resolves cruciform DNA. In Ureaplasma urealyticum serovar 10 (strain ATCC 33699 / Western), this protein is Holliday junction branch migration complex subunit RuvB.